A 114-amino-acid polypeptide reads, in one-letter code: Thioredoxin H1 (114 aa).

At A2 the chain carries N-acetylalanine. Positions 2–114 (ASEEGQVIAC…LQSTIAKHLA (113 aa)) constitute a Thioredoxin domain. Active-site nucleophile residues include C40 and C43. Residues C40 and C43 are joined by a disulfide bond.

This sequence belongs to the thioredoxin family. Plant H-type subfamily. As to quaternary structure, interacts with FBA6. Interacts with MDH1.

Its subcellular location is the cytoplasm. Its function is as follows. Thiol-disulfide oxidoreductase involved in the redox regulation of a number of cytosolic enzymes. Activates the cytosolic malate dehydrogenase (MDH) probably by reducing an interchain disulfide bond of the inactive MDH homodimer. Possesses insulin disulfide bonds reducing activity. This Arabidopsis thaliana (Mouse-ear cress) protein is Thioredoxin H1 (TRX1).